A 376-amino-acid chain; its full sequence is 3-dehydroquinate synthase (376 aa).

NAD(+) contacts are provided by residues 115–119 (GVIGD), 139–140 (TS), Lys-152, and Lys-161. Positions 194, 256, and 275 each coordinate Zn(2+).

The protein belongs to the sugar phosphate cyclases superfamily. Dehydroquinate synthase family. Co(2+) is required as a cofactor. Requires Zn(2+) as cofactor. The cofactor is NAD(+).

It is found in the cytoplasm. It carries out the reaction 7-phospho-2-dehydro-3-deoxy-D-arabino-heptonate = 3-dehydroquinate + phosphate. Its pathway is metabolic intermediate biosynthesis; chorismate biosynthesis; chorismate from D-erythrose 4-phosphate and phosphoenolpyruvate: step 2/7. Functionally, catalyzes the conversion of 3-deoxy-D-arabino-heptulosonate 7-phosphate (DAHP) to dehydroquinate (DHQ). The protein is 3-dehydroquinate synthase of Rhizobium etli (strain CIAT 652).